The sequence spans 319 residues: Olfactory receptor 8U8 (319 aa).

Over 1–28 the chain is Extracellular; it reads MAHINCTQATEFILVGLTDHQELKMPLF. N5 carries an N-linked (GlcNAc...) asparagine glycan. The helical transmembrane segment at 29 to 49 threads the bilayer; the sequence is VLFLSIYLFTVVGNLGLILLI. At 50–56 the chain is on the cytoplasmic side; it reads RADTSLN. Residues 57 to 77 traverse the membrane as a helical segment; the sequence is TPMYFFLSNLAFVDFCYSSVI. At 78–97 the chain is on the extracellular side; it reads TPKMLGNFLYKQNVISFDAC. C97 and C179 are disulfide-bonded. A helical membrane pass occupies residues 98–118; it reads ATQLGCFLTFMVSESLLLASM. The Cytoplasmic portion of the chain corresponds to 119–122; sequence AYDR. Residues 123–143 form a helical membrane-spanning segment; that stretch reads YVAICNPLLYMVVMTPGICIQ. The Extracellular portion of the chain corresponds to 144–204; it reads LVAVPYSYSF…KQLWILACAG (61 aa). A helical transmembrane segment spans residues 205–225; that stretch reads ITFICSVLIVFVSYMFIIFAI. Residues 226 to 239 lie on the Cytoplasmic side of the membrane; it reads LRMSSAEGRRKAFS. The chain crosses the membrane as a helical span at residues 240 to 260; the sequence is TCSSHMLAVTIFYGTLIFMYL. Residues 261–271 are Extracellular-facing; sequence QPSSSHSLDAD. Residues 272 to 292 traverse the membrane as a helical segment; sequence KMASVFYTVIIPMLNPLIYSL. The Cytoplasmic portion of the chain corresponds to 293-319; the sequence is RNKDVKDALKKVIINRNHAFIFLKLRK.

Belongs to the G-protein coupled receptor 1 family.

It is found in the cell membrane. Functionally, odorant receptor. The polypeptide is Olfactory receptor 8U8 (OR8U8) (Homo sapiens (Human)).